The primary structure comprises 271 residues: Putative hydro-lyase jk0403 (271 aa).

This sequence belongs to the D-glutamate cyclase family.

This is Putative hydro-lyase jk0403 from Corynebacterium jeikeium (strain K411).